Here is a 198-residue protein sequence, read N- to C-terminus: Single-stranded DNA cytosine deaminase (198 aa).

The Bipartite nuclear localization signal signature appears at 1–30 (MDSLLMKQRKFLYHFKNVRWAKGRHETYLC). Residues 2 to 26 (DSLLMKQRKFLYHFKNVRWAKGRHE) form an interaction with SUPT6H region. A CMP/dCMP-type deaminase domain is found at 23–129 (GRHETYLCYV…KAEPEGLRRL (107 aa)). A Phosphothreonine; by PKA modification is found at T27. S38 bears the Phosphoserine; by PKA mark. Positions 39 to 42 (ATSF) are important for interaction with CTNNBL1. H56 is a Zn(2+) binding site. The Proton donor role is filled by E58. Zn(2+)-binding residues include C87 and C90. The tract at residues 88-116 (YDCARHVADFLRGYPNLSLRIFAARLYFC) is required for interaction with RNF126. A Nuclear export signal motif is present at residues 183–198 (LYEVDDLRDAFRTLGL).

Belongs to the cytidine and deoxycytidylate deaminase family. Interacts with CTNNBL1; the interaction is important for the immunoglobulin switch activity of AICDA. Interacts (via its NLS) with KPNA1. Interacts with PKA/PRKACA and PRKAR1A/PKR1. Interacts with SUPT6H, TRIM28 and NCL. Directly interacts with MCM3AP; this interaction may favor AICDA recruitment to immunoglobulin variable region genes, hence promoting somatic hypermutations. Zn(2+) serves as cofactor. In terms of processing, ser-38 is the major site whereas Thr-27 is the minor site of phosphorylation. Phosphorylation regulates its class-switch recombination activity. Post-translationally, probably monoubiquitinated on several residues by RNF126. In terms of tissue distribution, expressed in thymus, lung, spleen, kidney, small intestine, lymph node and tonsil.

It localises to the nucleus. Its subcellular location is the cytoplasm. It carries out the reaction a 2'-deoxycytidine in single-stranded DNA + H2O + H(+) = a 2'-deoxyuridine in single-stranded DNA + NH4(+). Single-stranded DNA-specific cytidine deaminase. Involved in somatic hypermutation (SHM), gene conversion, and class-switch recombination (CSR) in B-lymphocytes by deaminating C to U during transcription of Ig-variable (V) and Ig-switch (S) region DNA. Required for several crucial steps of B-cell terminal differentiation necessary for efficient antibody responses. May also play a role in the epigenetic regulation of gene expression by participating in DNA demethylation. This Canis lupus familiaris (Dog) protein is Single-stranded DNA cytosine deaminase (AICDA).